Consider the following 461-residue polypeptide: Flavin-containing monooxygenase FMO GS-OX4 (461 aa).

Residue 17–22 (GAGAAG) coordinates FAD. 211–216 (GNFASG) lines the NADP(+) pocket.

It belongs to the FMO family.

The enzyme catalyses a (Z)-omega-(methylsulfanyl)-N-sulfo-alkylhydroximate S-glucoside + NADPH + O2 + H(+) = a (Z)-omega-(methylsulfinyl)-alkyl-glucosinolate + NADP(+) + H2O. In terms of biological role, catalyzes the conversion of methylthioalkyl glucosinolates of any chain length into methylsulfinylalkyl glucosinolates. The chain is Flavin-containing monooxygenase FMO GS-OX4 (FMOGS-OX4) from Arabidopsis thaliana (Mouse-ear cress).